Reading from the N-terminus, the 295-residue chain is Sperm acrosome membrane-associated protein 1 (295 aa).

Residues 1 to 29 (MSPGGAGCSAGLLLTVGWLLLAGLQSTCG) form the signal peptide. At 30–220 (INVTAVQDPS…SRPDTDAVLV (191 aa)) the chain is on the extracellular side. The disordered stretch occupies residues 39–71 (SLVSEGENEGEEEAENDSEVENEPQAEAEQDVS). A compositionally biased stretch (acidic residues) spans 44-68 (GENEGEEEAENDSEVENEPQAEAEQ). Asn-72 carries an N-linked (GlcNAc...) asparagine glycan. Residues 221-241 (FVLTIGVIICIFVIFVLIFII) form a helical membrane-spanning segment. Residues 242–295 (VNWATVKDFWASKASTTEIQSELSSMKYKDSTSLDQSPTEIPGHEDDALSEWNE) are Cytoplasmic-facing. Residue Ser-256 is modified to Phosphoserine. The tract at residues 263 to 295 (ELSSMKYKDSTSLDQSPTEIPGHEDDALSEWNE) is disordered. A Phosphotyrosine modification is found at Tyr-269. Ser-278 and Ser-291 each carry phosphoserine.

In terms of assembly, interacts with CYLC1; the interaction may be relevant for proper acrosome attachment to the nuclear envelope. N-glycosylated. Detected in spermatozoa (at protein level).

It localises to the cytoplasmic vesicle. The protein resides in the secretory vesicle. It is found in the acrosome inner membrane. Its function is as follows. Plays a role in acrosome expansion and establishment of normal sperm morphology during spermatogenesis. Important for male fertility. This Sus scrofa (Pig) protein is Sperm acrosome membrane-associated protein 1.